Consider the following 205-residue polypeptide: Outer-membrane lipoprotein LolB (205 aa).

The N-terminal stretch at 1–17 is a signal peptide; sequence MFLRHCITFTLIALLAG. Cys-18 carries N-palmitoyl cysteine lipidation. Cys-18 carries the S-diacylglycerol cysteine lipid modification.

This sequence belongs to the LolB family. As to quaternary structure, monomer.

Its subcellular location is the cell outer membrane. In terms of biological role, plays a critical role in the incorporation of lipoproteins in the outer membrane after they are released by the LolA protein. The polypeptide is Outer-membrane lipoprotein LolB (Pseudomonas putida (strain W619)).